The primary structure comprises 101 residues: Small ribosomal subunit protein uS14 (101 aa).

The protein belongs to the universal ribosomal protein uS14 family. Part of the 30S ribosomal subunit. Contacts proteins S3 and S10.

Binds 16S rRNA, required for the assembly of 30S particles and may also be responsible for determining the conformation of the 16S rRNA at the A site. This is Small ribosomal subunit protein uS14 from Neisseria gonorrhoeae (strain ATCC 700825 / FA 1090).